Here is a 264-residue protein sequence, read N- to C-terminus: Undecaprenyl-diphosphatase 2 (264 aa).

The next 7 helical transmembrane spans lie at 29–49 (GSAF…SYFW), 77–97 (SWIV…SGVL), 107–127 (LTVI…AEIF), 137–157 (ASLA…IPGV), 180–200 (FSFL…LWEL), 212–232 (VLAT…WGLM), and 243–263 (FVIY…MGWL).

The protein belongs to the UppP family.

It is found in the cell inner membrane. The catalysed reaction is di-trans,octa-cis-undecaprenyl diphosphate + H2O = di-trans,octa-cis-undecaprenyl phosphate + phosphate + H(+). In terms of biological role, catalyzes the dephosphorylation of undecaprenyl diphosphate (UPP). Confers resistance to bacitracin. The sequence is that of Undecaprenyl-diphosphatase 2 from Mesorhizobium japonicum (strain LMG 29417 / CECT 9101 / MAFF 303099) (Mesorhizobium loti (strain MAFF 303099)).